A 139-amino-acid chain; its full sequence is Histone H2B.11 (139 aa).

Basic and acidic residues predominate over residues 1–39 (MAPKAEKKPAEKKPVEEKAEKKPKAEKRVPGAKEGGGEK). The disordered stretch occupies residues 1–47 (MAPKAEKKPAEKKPVEEKAEKKPKAEKRVPGAKEGGGEKKGKKKAKK). 2 positions are modified to N6-acetyllysine: K7 and K27. A Glycyl lysine isopeptide (Lys-Gly) (interchain with G-Cter in ubiquitin) cross-link involves residue K135.

Belongs to the histone H2B family. As to quaternary structure, the nucleosome is a histone octamer containing two molecules each of H2A, H2B, H3 and H4 assembled in one H3-H4 heterotetramer and two H2A-H2B heterodimers. The octamer wraps approximately 147 bp of DNA. In terms of processing, can be acetylated to form H2BK6ac and H2BK33ac. Monoubiquitinated by BRE1 to form H2BK143ub1 and deubiquitinated by UBP26. Required for heterochromatic histone H3 di- and trimethylation at H3K4me. May give a specific tag for epigenetic transcriptional activation.

The protein resides in the nucleus. It localises to the chromosome. In terms of biological role, core component of nucleosome. Nucleosomes wrap and compact DNA into chromatin, limiting DNA accessibility to the cellular machineries which require DNA as a template. Histones thereby play a central role in transcription regulation, DNA repair, DNA replication and chromosomal stability. DNA accessibility is regulated via a complex set of post-translational modifications of histones, also called histone code, and nucleosome remodeling. This chain is Histone H2B.11 (H2B.11), found in Oryza sativa subsp. indica (Rice).